A 642-amino-acid polypeptide reads, in one-letter code: Eukaryotic translation initiation factor 2A (642 aa).

WD repeat units follow at residues 69 to 115 (MKLS…KKDC), 186 to 224 (TYLI…ITKK), 289 to 331 (LTTG…HSLP), and 374 to 419 (FDAT…VFVK). A disordered region spans residues 485–593 (ISQHPSREAS…KETSPEEKKI (109 aa)). 2 stretches are compositionally biased toward low complexity: residues 493-507 (ASSN…AGGA) and 563-583 (TSPD…PTNN). 3 positions are modified to phosphoserine: serine 564, serine 567, and serine 572.

This sequence belongs to the WD repeat EIF2A family. In terms of processing, ubiquitinated, probably leading to its degradation. May explain why it has a short half-life of 17 minutes.

In terms of biological role, functions in the early steps of protein synthesis of a small number of specific mRNAs. Acts by directing the binding of methionyl-tRNAi to 40S ribosomal subunits. In contrast to the eIF-2 complex, it binds methionyl-tRNAi to 40S subunits in a codon-dependent manner, whereas the eIF-2 complex binds methionyl-tRNAi to 40S subunits in a GTP-dependent manner. Specifically associates with both 40S subunits and 80S ribosomes. In Saccharomyces cerevisiae (strain ATCC 204508 / S288c) (Baker's yeast), this protein is Eukaryotic translation initiation factor 2A.